The sequence spans 599 residues: Membrane protein insertase YidC (599 aa).

The chain crosses the membrane as a helical span at residues 6 to 26; it reads NYFIAIALSVVIVLAWQFLYM. Residues 35–78 form a disordered region; sequence RAEEARQAQQQTTQQQPAPGAAPGATVEGAPPASSTQAAATATR. Residues 41-76 are compositionally biased toward low complexity; the sequence is QAQQQTTQQQPAPGAAPGATVEGAPPASSTQAAATA. The next 4 helical transmembrane spans lie at 378–398, 448–468, 501–521, and 536–556; these read FGVA…PLAS, WPML…YVTI, VPHF…MFLQ, and IFTW…AGLV.

Belongs to the OXA1/ALB3/YidC family. Type 1 subfamily. In terms of assembly, interacts with the Sec translocase complex via SecD. Specifically interacts with transmembrane segments of nascent integral membrane proteins during membrane integration.

The protein localises to the cell inner membrane. Required for the insertion and/or proper folding and/or complex formation of integral membrane proteins into the membrane. Involved in integration of membrane proteins that insert both dependently and independently of the Sec translocase complex, as well as at least some lipoproteins. Aids folding of multispanning membrane proteins. This chain is Membrane protein insertase YidC, found in Agrobacterium fabrum (strain C58 / ATCC 33970) (Agrobacterium tumefaciens (strain C58)).